Consider the following 62-residue polypeptide: MDTEEKKKTTASVEHARMLQNEIQQLFAQLRDTNSQIRCDLNEFEQIKESSTTADSTTNSAN.

The stretch at 14 to 49 forms a coiled coil; it reads EHARMLQNEIQQLFAQLRDTNSQIRCDLNEFEQIKE.

This chain is Coiled-coil domain-containing protein YLR146W-A, found in Saccharomyces cerevisiae (strain ATCC 204508 / S288c) (Baker's yeast).